The primary structure comprises 1484 residues: MYSEWRSLHLVIQSDQGHTSVLHSYPESVGREVANAVVRPLGQALGTSSVAGSESLLKTDKEVKWTMEVICYGLTLPLDGETVKYCVDVYTDWIMALVLPKDSIPLPIIKEPNLYVQSILKHLQNLFVPRQEQGSSQIRLCLQVLRAIQKLARESSIMARETWEVLLLFLLQINDILLAPPTVQGGIAENLAEKLIGVLFEVWLLACTRCFPTPPYWKTAKEMVANWRHHPAVVEQWSKVICALTSRLLRFTYGPSFPPFKVPDEDANLIPPEMDNECIAQTWFRFLHMLSNPVDLSNPAVISSTPKFQEQFLNVSGMPQELSQYPCLKHLPQIFFRAMRGISCLVDAFLGISRPRSDSAPPTPVNRLSMPQSAAVNTTPPHNRRHRAVTVNKATMKTSTVTTAHTSKVQHQASSTSPLSSPNQTSSEPRPLPAPRRPKVNSILNLFGSWLFDAAFVHCKLHNGINRDNSMTASFIQILLSYKSSIATQASMEFRRKGSQMSTDTMVSNPVFDASEFPDNYEAGRAEACGTLCRIFCSKKTGEEILPAYLSSVILNSPPLFCCDLKGIDVVVPYFISALETILPDRELSKFKSYVNPTELRRSSINILLSLLPLPHHFGTVRSEVVLEGKFSNDDSSSYDKPITFLSLKLRLVNILIGALQTETDPNNTQMILGAMLNIVQDSALLEAIGCQMEMGGGENNLKSHSRTNSGISSASGGSTEPTTPDSERPAQALLRDYGSTDSAAGLLIRSIHLVTQRLNSQWRQDMSISLAALELLSGLAKVKVMVDSGDRKRAISSVCSYIVYQCSRPAPLHSRDLHSMIVAAFQCLCVWLTEHPDMLDEKDCLKEVLEIVELGISGSKSKNSEQEVKYKGDKEPNPASMRVKDAAEATLTCIMQLLGAFPSPSGPASPCSLVNETTLIKYSRLPTINKHSFRYFVLDNSVILAMLEQPLGNEQNDFFPSVTVLVRGMSGRLAWAQQLCLLPRGAKANQKLFVPEPRPVPKNDVGFKYSVKHRPFPEEVDKIPFVKADLSIPDLHEIVTEELEERHEKLRSGMAQQIAYEMHLEQQSEGELQKRSFPDPVTDCKPPPPAQEFQTARLFLSHFGFLSLEALKEPANSRLPPHLIALDSTIPGFFDDIGYLDLLPCRPFDTVFIFYMKPGQKTNQEILKNVESSRNVQPHFLEFLLSLGWSVDVGKHPGWTGHVSTSWSINSCDDGEGSEPDEITSSEDVGASIFNGQKKVLYYADALTEIAFVVPSPVESLTDSLESNISDQDSDSNMDLMPGILKQPPLTLELVPNHTDSLNSSQRLSPSSRMKKLPQGRPVPPLGPETRVSVVWVERYDDIENFPLSDLMTEISTGVETTANSSTSLRSTTLEKEVPVIFIHPLNTGLFRIKIQGATGKFNMVIPLVDGMIVSRRALGFLVRQTVINICRRKRLESDSYSPPHVRRKQKITDIVNKYRNKQLEPEFYTALFQEVGLKNCSS.

Disordered stretches follow at residues Pro355–Arg437 and Glu699–Glu728. Phosphoserine is present on Ser359. Thr363 and Thr379 each carry phosphothreonine. 3 stretches are compositionally biased toward polar residues: residues Ser369–Pro381, Asn392–Glu428, and Asn701–Pro725. Phosphoserine is present on residues Ser421 and Ser710. A Phosphothreonine modification is found at Thr724. Positions Ile1138–Ile1382 constitute a Rap-GAP domain. A Phosphoserine modification is found at Ser1275. The segment at Pro1297 to Pro1325 is disordered. The span at Ser1302–Ser1313 shows a compositional bias: low complexity.

Component of the heterodimeric RalGAP1 complex with RALGAPA1 and of the heterodimeric RalGAP2 complex with RALGAPA2. Heterodimerization is required for activity. In terms of tissue distribution, abundantly expressed in testis, pancreas, lung, thymus, brown fat, and white fat. Expressed at lower levels in the brain.

In terms of biological role, non-catalytic subunit of the heterodimeric RalGAP1 and RalGAP2 complexes which act as GTPase activators for the Ras-like small GTPases RALA and RALB. This chain is Ral GTPase-activating protein subunit beta (Ralgapb), found in Mus musculus (Mouse).